Reading from the N-terminus, the 442-residue chain is tRNA modification GTPase MnmE (442 aa).

The (6S)-5-formyl-5,6,7,8-tetrahydrofolate site is built by arginine 22, glutamate 79, and lysine 118. The TrmE-type G domain maps to 215–365 (EIPIAIVGRP…LEKAILFEYQ (151 aa)). Position 225 (asparagine 225) interacts with K(+). Residues 225–230 (NVGKSS), 244–250 (TNIEGTT), and 269–272 (DTAG) each bind GTP. Position 229 (serine 229) interacts with Mg(2+). Threonine 244, isoleucine 246, and threonine 249 together coordinate K(+). Threonine 250 contacts Mg(2+). (6S)-5-formyl-5,6,7,8-tetrahydrofolate is bound at residue lysine 442.

It belongs to the TRAFAC class TrmE-Era-EngA-EngB-Septin-like GTPase superfamily. TrmE GTPase family. In terms of assembly, homodimer. Heterotetramer of two MnmE and two MnmG subunits. K(+) serves as cofactor.

The protein localises to the cytoplasm. Functionally, exhibits a very high intrinsic GTPase hydrolysis rate. Involved in the addition of a carboxymethylaminomethyl (cmnm) group at the wobble position (U34) of certain tRNAs, forming tRNA-cmnm(5)s(2)U34. In Mycoplasmopsis pulmonis (strain UAB CTIP) (Mycoplasma pulmonis), this protein is tRNA modification GTPase MnmE.